We begin with the raw amino-acid sequence, 38 residues long: Histidine decarboxylase small chain (38 aa).

As to quaternary structure, heterohexamer of 3 large and 3 small chains. Pyruvate is required as a cofactor.

The enzyme catalyses L-histidine + H(+) = histamine + CO2. The sequence is that of Histidine decarboxylase small chain from Micrococcus sp.